A 30-amino-acid polypeptide reads, in one-letter code: Cyclotide cter-G (30 aa).

Residues 1-30 (GLPCGESCVFIPCITTVVGCSCKNKVCYNN) constitute a cross-link (cyclopeptide (Gly-Asn)). Cystine bridges form between cysteine 4/cysteine 20, cysteine 8/cysteine 22, and cysteine 13/cysteine 27.

In terms of processing, contains 3 disulfide bonds. Post-translationally, this is a cyclic peptide.

Probably participates in a plant defense mechanism. In Clitoria ternatea (Butterfly pea), this protein is Cyclotide cter-G.